The primary structure comprises 183 residues: Peptidyl-tRNA hydrolase (183 aa).

TRNA is bound at residue Tyr14. His19 serves as the catalytic Proton acceptor. TRNA contacts are provided by Tyr55 and Asn57.

The protein belongs to the PTH family. In terms of assembly, monomer.

Its subcellular location is the cytoplasm. The catalysed reaction is an N-acyl-L-alpha-aminoacyl-tRNA + H2O = an N-acyl-L-amino acid + a tRNA + H(+). Its function is as follows. Hydrolyzes ribosome-free peptidyl-tRNAs (with 1 or more amino acids incorporated), which drop off the ribosome during protein synthesis, or as a result of ribosome stalling. Catalyzes the release of premature peptidyl moieties from peptidyl-tRNA molecules trapped in stalled 50S ribosomal subunits, and thus maintains levels of free tRNAs and 50S ribosomes. This is Peptidyl-tRNA hydrolase from Thermus thermophilus (strain ATCC BAA-163 / DSM 7039 / HB27).